Reading from the N-terminus, the 132-residue chain is Large ribosomal subunit protein bL20c (132 aa).

This sequence belongs to the bacterial ribosomal protein bL20 family.

It is found in the plastid. The protein resides in the chloroplast. Functionally, binds directly to 23S ribosomal RNA and is necessary for the in vitro assembly process of the 50S ribosomal subunit. It is not involved in the protein synthesizing functions of that subunit. The sequence is that of Large ribosomal subunit protein bL20c from Coffea arabica (Arabian coffee).